The primary structure comprises 263 residues: Fructose-bisphosphate aldolase class 1 (263 aa).

Substrate is bound by residues 24-25 (DH), His-29, Asp-33, and Trp-144. The active-site Proton donor is Tyr-146. Substrate-binding positions include Arg-148, 177–179 (KIK), 202–204 (SGG), and 231–232 (GR). Lys-177 (schiff-base intermediate with dihydroxyacetone-P) is an active-site residue.

Belongs to the DeoC/FbaB aldolase family. As to quaternary structure, homodecamer (dimer of pentamers).

The protein resides in the cytoplasm. It carries out the reaction beta-D-fructose 1,6-bisphosphate = D-glyceraldehyde 3-phosphate + dihydroxyacetone phosphate. Its activity is regulated as follows. Activated by citrate. In terms of biological role, catalyzes the reversible cleavage of fructose 1,6-bisphosphate (FBP) to glyceraldehyde 3-phosphate (GAP) and dihydroxyacetone phosphate (DHAP). This Thermoproteus tenax (strain ATCC 35583 / DSM 2078 / JCM 9277 / NBRC 100435 / Kra 1) protein is Fructose-bisphosphate aldolase class 1 (fba).